The following is a 616-amino-acid chain: Dihydroxy-acid dehydratase (616 aa).

Aspartate 81 contributes to the Mg(2+) binding site. Cysteine 122 lines the [2Fe-2S] cluster pocket. The Mg(2+) site is built by aspartate 123 and lysine 124. Lysine 124 carries the N6-carboxylysine modification. Residue cysteine 195 participates in [2Fe-2S] cluster binding. Glutamate 491 contributes to the Mg(2+) binding site. Residue serine 517 is the Proton acceptor of the active site.

The protein belongs to the IlvD/Edd family. In terms of assembly, homodimer. [2Fe-2S] cluster is required as a cofactor. It depends on Mg(2+) as a cofactor.

It catalyses the reaction (2R)-2,3-dihydroxy-3-methylbutanoate = 3-methyl-2-oxobutanoate + H2O. The enzyme catalyses (2R,3R)-2,3-dihydroxy-3-methylpentanoate = (S)-3-methyl-2-oxopentanoate + H2O. The protein operates within amino-acid biosynthesis; L-isoleucine biosynthesis; L-isoleucine from 2-oxobutanoate: step 3/4. Its pathway is amino-acid biosynthesis; L-valine biosynthesis; L-valine from pyruvate: step 3/4. In terms of biological role, functions in the biosynthesis of branched-chain amino acids. Catalyzes the dehydration of (2R,3R)-2,3-dihydroxy-3-methylpentanoate (2,3-dihydroxy-3-methylvalerate) into 2-oxo-3-methylpentanoate (2-oxo-3-methylvalerate) and of (2R)-2,3-dihydroxy-3-methylbutanoate (2,3-dihydroxyisovalerate) into 2-oxo-3-methylbutanoate (2-oxoisovalerate), the penultimate precursor to L-isoleucine and L-valine, respectively. In Salmonella dublin (strain CT_02021853), this protein is Dihydroxy-acid dehydratase.